The sequence spans 303 residues: Bifunctional protein FolD (303 aa).

NADP(+) contacts are provided by residues 168-170 (GRS), threonine 197, and valine 238.

The protein belongs to the tetrahydrofolate dehydrogenase/cyclohydrolase family. As to quaternary structure, homodimer.

It catalyses the reaction (6R)-5,10-methylene-5,6,7,8-tetrahydrofolate + NADP(+) = (6R)-5,10-methenyltetrahydrofolate + NADPH. The enzyme catalyses (6R)-5,10-methenyltetrahydrofolate + H2O = (6R)-10-formyltetrahydrofolate + H(+). The protein operates within one-carbon metabolism; tetrahydrofolate interconversion. Functionally, catalyzes the oxidation of 5,10-methylenetetrahydrofolate to 5,10-methenyltetrahydrofolate and then the hydrolysis of 5,10-methenyltetrahydrofolate to 10-formyltetrahydrofolate. The polypeptide is Bifunctional protein FolD (Desulfosudis oleivorans (strain DSM 6200 / JCM 39069 / Hxd3) (Desulfococcus oleovorans)).